The sequence spans 75 residues: Sec-independent protein translocase protein TatA (75 aa).

A helical membrane pass occupies residues 1-21; the sequence is MGSMSIWHWIVVLAVVLLLFG. The tract at residues 43–75 is disordered; sequence MAEDDDAPAKPAEPPRAVPHQATPAPESEKKAV.

Belongs to the TatA/E family. As to quaternary structure, the Tat system comprises two distinct complexes: a TatABC complex, containing multiple copies of TatA, TatB and TatC subunits, and a separate TatA complex, containing only TatA subunits. Substrates initially bind to the TatABC complex, which probably triggers association of the separate TatA complex to form the active translocon.

It localises to the cell inner membrane. Part of the twin-arginine translocation (Tat) system that transports large folded proteins containing a characteristic twin-arginine motif in their signal peptide across membranes. TatA could form the protein-conducting channel of the Tat system. In Azorhizobium caulinodans (strain ATCC 43989 / DSM 5975 / JCM 20966 / LMG 6465 / NBRC 14845 / NCIMB 13405 / ORS 571), this protein is Sec-independent protein translocase protein TatA.